An 86-amino-acid chain; its full sequence is Small ribosomal subunit protein bS20 (86 aa).

A disordered region spans residues 1 to 22 (MANIKSQIKRIRTNERRRLRNQ). Residues 7 to 20 (QIKRIRTNERRRLR) are compositionally biased toward basic residues.

Belongs to the bacterial ribosomal protein bS20 family.

In terms of biological role, binds directly to 16S ribosomal RNA. This Mycolicibacterium smegmatis (strain ATCC 700084 / mc(2)155) (Mycobacterium smegmatis) protein is Small ribosomal subunit protein bS20.